The sequence spans 350 residues: Casein kinase II subunit alpha' (350 aa).

The Protein kinase domain occupies 40–325; the sequence is YQLVRKLGRG…AKEAMEHPYF (286 aa). ATP-binding positions include 46–54 and Lys-69; that span reads LGRGKYSEV. Asp-157 serves as the catalytic Proton acceptor.

Belongs to the protein kinase superfamily. Ser/Thr protein kinase family. CK2 subfamily. In terms of assembly, tetramer composed of an alpha chain, an alpha' and two beta chains.

The enzyme catalyses L-seryl-[protein] + ATP = O-phospho-L-seryl-[protein] + ADP + H(+). It carries out the reaction L-threonyl-[protein] + ATP = O-phospho-L-threonyl-[protein] + ADP + H(+). Its function is as follows. Casein kinases are operationally defined by their preferential utilization of acidic proteins such as caseins as substrates. The alpha and alpha' chains contain the catalytic site. Participates in Wnt signaling. This chain is Casein kinase II subunit alpha', found in Gallus gallus (Chicken).